Here is a 652-residue protein sequence, read N- to C-terminus: DNA ligase (652 aa).

NAD(+) is bound by residues 29–33, 78–79, and Glu107; these read DSEYD and SL. Residue Lys109 is the N6-AMP-lysine intermediate of the active site. 4 residues coordinate NAD(+): Arg130, Glu164, Lys278, and Lys302. Zn(2+) contacts are provided by Cys395, Cys398, Cys413, and Cys418. The region spanning 577 to 652 is the BRCT domain; that stretch reads VADAALSGLT…VRDEAWLESL (76 aa).

This sequence belongs to the NAD-dependent DNA ligase family. LigA subfamily. Requires Mg(2+) as cofactor. Mn(2+) is required as a cofactor.

It carries out the reaction NAD(+) + (deoxyribonucleotide)n-3'-hydroxyl + 5'-phospho-(deoxyribonucleotide)m = (deoxyribonucleotide)n+m + AMP + beta-nicotinamide D-nucleotide.. Functionally, DNA ligase that catalyzes the formation of phosphodiester linkages between 5'-phosphoryl and 3'-hydroxyl groups in double-stranded DNA using NAD as a coenzyme and as the energy source for the reaction. It is essential for DNA replication and repair of damaged DNA. This is DNA ligase from Streptococcus pneumoniae (strain Taiwan19F-14).